The primary structure comprises 217 residues: Putative N-acetylmuramoyl-L-alanine amidase (217 aa).

The 204-residue stretch at 3-206 (IAIDAGHGGQ…ISKSISIALK (204 aa)) folds into the MurNAc-LAA domain.

This sequence belongs to the N-acetylmuramoyl-L-alanine amidase 3 family.

The protein localises to the secreted. The catalysed reaction is Hydrolyzes the link between N-acetylmuramoyl residues and L-amino acid residues in certain cell-wall glycopeptides.. Its function is as follows. Cell-wall hydrolase involved in septum cleavage during cell division. The chain is Putative N-acetylmuramoyl-L-alanine amidase (amiB) from Buchnera aphidicola subsp. Baizongia pistaciae (strain Bp).